A 631-amino-acid chain; its full sequence is Biotin--protein ligase (631 aa).

In terms of domain architecture, BPL/LPL catalytic spans 341 to 553; that stretch reads ELYAKLINGC…QFDRYHRLLL (213 aa).

It belongs to the biotin--protein ligase family. In terms of assembly, monomer.

It is found in the cytoplasm. It catalyses the reaction apo-[methylmalonyl-CoA:pyruvate carboxytransferase] + biotin + ATP = holo-[methylmalonyl-CoA:pyruvate carboxytransferase] + AMP + diphosphate + H(+). The enzyme catalyses apo-[propionyl-CoA:carbon-dioxide ligase (ADP-forming)] + biotin + ATP = holo-[propionyl-CoA:carbon-dioxide ligase (ADP-forming)] + AMP + diphosphate + H(+). The catalysed reaction is apo-[3-methylcrotonoyl-CoA:carbon-dioxide ligase (ADP-forming)] + biotin + ATP = holo-[3-methylcrotonoyl-CoA:carbon-dioxide ligase (ADP-forming)] + AMP + diphosphate + H(+). It carries out the reaction biotin + L-lysyl-[protein] + ATP = N(6)-biotinyl-L-lysyl-[protein] + AMP + diphosphate + H(+). Functionally, post-translational modification of specific protein by attachment of biotin. Acts on various carboxylases such as acetyl-CoA-carboxylase, pyruvate carboxylase, propionyl CoA carboxylase, and 3-methylcrotonyl CoA carboxylase. This chain is Biotin--protein ligase (bpl1), found in Schizosaccharomyces pombe (strain 972 / ATCC 24843) (Fission yeast).